The chain runs to 227 residues: PKHD-type hydroxylase Bcen_3557 (227 aa).

Residues 78–178 (KVFPPLFNRY…RVASFFWIQS (101 aa)) enclose the Fe2OG dioxygenase domain. 3 residues coordinate Fe cation: His96, Asp98, and His159. Arg169 serves as a coordination point for 2-oxoglutarate.

Requires Fe(2+) as cofactor. L-ascorbate is required as a cofactor.

This chain is PKHD-type hydroxylase Bcen_3557, found in Burkholderia orbicola (strain AU 1054).